Consider the following 863-residue polypeptide: Glycogen phosphorylase (863 aa).

Position 618 is an N6-(pyridoxal phosphate)lysine (Lys618).

It belongs to the glycogen phosphorylase family. Pyridoxal 5'-phosphate serves as cofactor.

It carries out the reaction [(1-&gt;4)-alpha-D-glucosyl](n) + phosphate = [(1-&gt;4)-alpha-D-glucosyl](n-1) + alpha-D-glucose 1-phosphate. In terms of biological role, phosphorylase is an important allosteric enzyme in carbohydrate metabolism. Enzymes from different sources differ in their regulatory mechanisms and in their natural substrates. However, all known phosphorylases share catalytic and structural properties. The chain is Glycogen phosphorylase (glgP) from Mycobacterium tuberculosis (strain CDC 1551 / Oshkosh).